The primary structure comprises 429 residues: Glutamyl-tRNA reductase (429 aa).

Substrate contacts are provided by residues 49-52 (TCNR), S108, 113-115 (EAQ), and Q119. C50 (nucleophile) is an active-site residue. 188 to 193 (GAGEMS) contributes to the NADP(+) binding site.

It belongs to the glutamyl-tRNA reductase family. As to quaternary structure, homodimer.

It catalyses the reaction (S)-4-amino-5-oxopentanoate + tRNA(Glu) + NADP(+) = L-glutamyl-tRNA(Glu) + NADPH + H(+). The protein operates within porphyrin-containing compound metabolism; protoporphyrin-IX biosynthesis; 5-aminolevulinate from L-glutamyl-tRNA(Glu): step 1/2. Its function is as follows. Catalyzes the NADPH-dependent reduction of glutamyl-tRNA(Glu) to glutamate 1-semialdehyde (GSA). The sequence is that of Glutamyl-tRNA reductase from Rubrobacter xylanophilus (strain DSM 9941 / JCM 11954 / NBRC 16129 / PRD-1).